The chain runs to 789 residues: LPS-assembly protein LptD (789 aa).

The N-terminal stretch at 1 to 39 (MPPRQLSQTTPSCAVVPRKRRLVAALIAVPGLMPALAHA) is a signal peptide.

This sequence belongs to the LptD family. As to quaternary structure, component of the lipopolysaccharide transport and assembly complex. Interacts with LptE and LptA.

The protein localises to the cell outer membrane. Its function is as follows. Together with LptE, is involved in the assembly of lipopolysaccharide (LPS) at the surface of the outer membrane. The polypeptide is LPS-assembly protein LptD (Paraburkholderia xenovorans (strain LB400)).